Here is a 120-residue protein sequence, read N- to C-terminus: Prophage bactoprenol-linked glucose translocase homolog (120 aa).

Topologically, residues 1–9 (MLKLFAKYT) are cytoplasmic. The helical transmembrane segment at 10-30 (SIGVLNTLIHWVVFGVCIYVA) threads the bilayer. The Periplasmic portion of the chain corresponds to 31 to 33 (HTN). A helical membrane pass occupies residues 34–54 (QALANFAGFVVAVSFSFFANA). Residues 55-64 (KFTFKASTTT) are Cytoplasmic-facing. A helical transmembrane segment spans residues 65–85 (MRYMLYVGFMGTLSATVGWAA). Residues 86–88 (DRC) are Periplasmic-facing. A helical membrane pass occupies residues 89–109 (ALPPMITLVTFSAISLVCGFV). Topologically, residues 110 to 120 (YSKFIVFRDAK) are cytoplasmic.

It belongs to the GtrA family.

The protein resides in the cell inner membrane. Its function is as follows. Involved in O antigen modification. Involved in the translocation of bactoprenol-linked glucose across the cytoplasmic membrane. The protein is Prophage bactoprenol-linked glucose translocase homolog (yfdG) of Escherichia coli (strain K12).